The chain runs to 406 residues: Tryptophan synthase beta chain (406 aa).

Lysine 97 is subject to N6-(pyridoxal phosphate)lysine.

Belongs to the TrpB family. Tetramer of two alpha and two beta chains. Requires pyridoxal 5'-phosphate as cofactor.

The enzyme catalyses (1S,2R)-1-C-(indol-3-yl)glycerol 3-phosphate + L-serine = D-glyceraldehyde 3-phosphate + L-tryptophan + H2O. Its pathway is amino-acid biosynthesis; L-tryptophan biosynthesis; L-tryptophan from chorismate: step 5/5. In terms of biological role, the beta subunit is responsible for the synthesis of L-tryptophan from indole and L-serine. This Lacticaseibacillus paracasei (strain ATCC 334 / BCRC 17002 / CCUG 31169 / CIP 107868 / KCTC 3260 / NRRL B-441) (Lactobacillus paracasei) protein is Tryptophan synthase beta chain.